The following is a 309-amino-acid chain: Zinc-finger homeodomain protein 5 (309 aa).

The segment covering 1 to 16 has biased composition (basic and acidic residues); it reads MDMRSHEMIERRREDN. The segment at 1-21 is disordered; sequence MDMRSHEMIERRREDNGNNNG. A ZF-HD dimerization-type; degenerate zinc finger spans residues 76–125; the sequence is YRECLKNHAASVGGSVHDGCGEFMPSGEEGTIEALRCAACDCHRNFHRKE. A DNA-binding region (homeobox) is located at residues 240-303; that stretch reads KKRFRTKFTT…NNKNNAKKPP (64 aa).

In terms of assembly, homo- and heterodimer with other ZFHD proteins. Interacts with MIF1, MIF2 and MIF3; these interactions prevent nuclear localization and DNA-binding to inhibit transcription regulation activity. Binds to ZHD1, ZHD2, ZHD4, ZHD10 and ZHD11. Mostly expressed in flowers and inflorescence.

Its subcellular location is the nucleus. In terms of biological role, putative transcription factor. Binds DNA at 5'-ATTA-3' consensus promoter regions. Regulates floral architecture and leaf development. Regulators in the abscisic acid (ABA) signal pathway that confers sensitivity to ABA in an ARF2-dependent manner. The chain is Zinc-finger homeodomain protein 5 (ZHD5) from Arabidopsis thaliana (Mouse-ear cress).